The following is a 1366-amino-acid chain: DNA-directed RNA polymerase subunit beta (1366 aa).

It belongs to the RNA polymerase beta chain family. The RNAP catalytic core consists of 2 alpha, 1 beta, 1 beta' and 1 omega subunit. When a sigma factor is associated with the core the holoenzyme is formed, which can initiate transcription.

It carries out the reaction RNA(n) + a ribonucleoside 5'-triphosphate = RNA(n+1) + diphosphate. DNA-dependent RNA polymerase catalyzes the transcription of DNA into RNA using the four ribonucleoside triphosphates as substrates. This is DNA-directed RNA polymerase subunit beta from Polynucleobacter necessarius subsp. necessarius (strain STIR1).